The primary structure comprises 148 residues: Gametocyte-specific factor 1-like (148 aa).

CHHC U11-48K-type zinc fingers lie at residues 6 to 33 and 40 to 67; these read FEIC…RRKN and MATC…VNRS. Zn(2+)-binding residues include C9, H15, H25, C29, C43, H49, H59, and C63. Positions 67–99 are disordered; the sequence is SAVEEEDTENPLKVSPPSSEQNDDTQQVSPCLP. Residues 82-95 show a composition bias toward polar residues; that stretch reads PPSSEQNDDTQQVS.

It belongs to the UPF0224 (FAM112) family.

The sequence is that of Gametocyte-specific factor 1-like (GTSF1L) from Homo sapiens (Human).